A 354-amino-acid polypeptide reads, in one-letter code: Ornithine transcarbamylase, mitochondrial (354 aa).

A mitochondrion-targeting transit peptide spans 1-32 (MLFNLRILLNNAAFRNGHNFMVRNFRCGQPLQ). N6-acetyllysine; alternate is present on Lys70. Residue Lys70 is modified to N6-succinyllysine; alternate. Lys80 is subject to N6-succinyllysine. Position 88 is an N6-acetyllysine; alternate (Lys88). Lys88 carries the N6-succinyllysine; alternate modification. 90–93 (STRT) provides a ligand contact to carbamoyl phosphate. Ser133 carries the post-translational modification Phosphoserine. Position 141 (Arg141) interacts with carbamoyl phosphate. Lys144 carries the N6-acetyllysine; alternate modification. Lys144 bears the N6-succinyllysine; alternate mark. Residues His168 and Gln171 each coordinate carbamoyl phosphate. Residue Asn199 coordinates L-ornithine. Residues Lys221, Lys231, and Lys238 each carry the N6-acetyllysine; alternate modification. An N6-succinyllysine; alternate mark is found at Lys221, Lys231, and Lys238. Lys243 bears the N6-acetyllysine mark. L-ornithine contacts are provided by Asp263, Ser267, and Met268. 2 positions are modified to N6-succinyllysine: Lys274 and Lys289. Residue Lys292 is modified to N6-acetyllysine; alternate. Lys292 is modified (N6-succinyllysine; alternate). The active-site Proton acceptor is the Cys303. 303–304 (CL) lines the carbamoyl phosphate pocket. N6-acetyllysine; alternate is present on Lys307. Lys307 carries the post-translational modification N6-succinyllysine; alternate. Residue Arg330 coordinates carbamoyl phosphate.

This sequence belongs to the aspartate/ornithine carbamoyltransferase superfamily. OTCase family. In terms of assembly, homotrimer. Acetylation at Lys-88 negatively regulates ornithine carbamoyltransferase activity in response to nutrient signals. In terms of tissue distribution, mainly expressed in liver and intestinal mucosa.

The protein localises to the mitochondrion matrix. The enzyme catalyses carbamoyl phosphate + L-ornithine = L-citrulline + phosphate + H(+). It functions in the pathway nitrogen metabolism; urea cycle; L-citrulline from L-ornithine and carbamoyl phosphate: step 1/1. With respect to regulation, negatively regulated by lysine acetylation. Its function is as follows. Catalyzes the second step of the urea cycle, the condensation of carbamoyl phosphate with L-ornithine to form L-citrulline. The urea cycle ensures the detoxification of ammonia by converting it to urea for excretion. This chain is Ornithine transcarbamylase, mitochondrial, found in Homo sapiens (Human).